The sequence spans 111 residues: U-scoloptoxin(16)-Sm2a (111 aa).

A signal peptide spans 1 to 28 (MCAKPNHLFVTVTFIFGFAVCIVQISAW).

Belongs to the scoloptoxin-16 family. In terms of processing, contains 4 disulfide bonds. In terms of tissue distribution, expressed by the venom gland.

The protein resides in the secreted. The polypeptide is U-scoloptoxin(16)-Sm2a (Scolopendra morsitans (Tanzanian blue ringleg centipede)).